The sequence spans 444 residues: Probable D-serine dehydratase (444 aa).

Position 110 is an N6-(pyridoxal phosphate)lysine (K110).

This sequence belongs to the serine/threonine dehydratase family. DsdA subfamily. Pyridoxal 5'-phosphate is required as a cofactor.

It catalyses the reaction D-serine = pyruvate + NH4(+). This Burkholderia thailandensis (strain ATCC 700388 / DSM 13276 / CCUG 48851 / CIP 106301 / E264) protein is Probable D-serine dehydratase.